The chain runs to 425 residues: Serine--tRNA ligase (425 aa).

231 to 233 is an L-serine binding site; the sequence is TAE. ATP is bound at residue 262-264; the sequence is RSE. E285 serves as a coordination point for L-serine. 349–352 contacts ATP; the sequence is EISS. Residue S385 coordinates L-serine.

Belongs to the class-II aminoacyl-tRNA synthetase family. Type-1 seryl-tRNA synthetase subfamily. In terms of assembly, homodimer. The tRNA molecule binds across the dimer.

Its subcellular location is the cytoplasm. It carries out the reaction tRNA(Ser) + L-serine + ATP = L-seryl-tRNA(Ser) + AMP + diphosphate + H(+). The enzyme catalyses tRNA(Sec) + L-serine + ATP = L-seryl-tRNA(Sec) + AMP + diphosphate + H(+). The protein operates within aminoacyl-tRNA biosynthesis; selenocysteinyl-tRNA(Sec) biosynthesis; L-seryl-tRNA(Sec) from L-serine and tRNA(Sec): step 1/1. Its function is as follows. Catalyzes the attachment of serine to tRNA(Ser). Is also able to aminoacylate tRNA(Sec) with serine, to form the misacylated tRNA L-seryl-tRNA(Sec), which will be further converted into selenocysteinyl-tRNA(Sec). This Maricaulis maris (strain MCS10) (Caulobacter maris) protein is Serine--tRNA ligase.